A 788-amino-acid polypeptide reads, in one-letter code: Ribonucleoside-diphosphate reductase large subunit (788 aa).

The region spanning 7-98 (TYVVKRDGRK…VSNLHKKTNK (92 aa)) is the ATP-cone domain. ATP-binding positions include 11 to 12 (KR), 17 to 23 (EDVHFDK), Thr-59, and Asp-63. GDP contacts are provided by Ser-208 and Ser-223. Cys-224 and Cys-450 form a disulfide bridge. DTTP is bound by residues 232–234 (DSI), Lys-249, Arg-262, and 269–270 (AG). Asn-433 is a GDP binding site. The Proton acceptor role is filled by Asn-433. Cys-435 acts as the Cysteine radical intermediate in catalysis. Residues Glu-437 and 610 to 613 (TAST) contribute to the GDP site. The active-site Proton acceptor is Glu-437.

It belongs to the ribonucleoside diphosphate reductase large chain family. Heterodimer of a large and a small subunit.

It carries out the reaction a 2'-deoxyribonucleoside 5'-diphosphate + [thioredoxin]-disulfide + H2O = a ribonucleoside 5'-diphosphate + [thioredoxin]-dithiol. Under complex allosteric control mediated by deoxynucleoside triphosphates and ATP binding to separate specificity and activation sites on the large subunit. The type of nucleotide bound at the specificity site determines substrate preference. It seems probable that ATP makes the enzyme reduce CDP and UDP, dGTP favors ADP reduction and dTTP favors GDP reduction. Stimulated by ATP and inhibited by dATP binding to the activity site. Functionally, provides the precursors necessary for DNA synthesis. Catalyzes the biosynthesis of deoxyribonucleotides from the corresponding ribonucleotides. The polypeptide is Ribonucleoside-diphosphate reductase large subunit (rnr-1) (Caenorhabditis elegans).